The sequence spans 289 residues: MRLLVKAPAKINLSLDVLHKRPDGYHEVKMVMTTIDLADRIELIPQMDDTIQIISKNRFVPDDHRNLAYQAAKLLKDTFAIKQGIAISITKNIPVAAGLAGGSSDAAATLRGLNKLWNLGLTLDELAELGAKIGSDVSFCVYGGTAIATGRGEKITPIPAPPPCWVILAKPSIGVSTAEVYRNLKVDEIPHPDVDGMVEAIYRQDYAAICKLVGNVLEEVTLKKYPEVAHIKEQMKRFGADAVLMSGSGPTVFGLVQHDSRLQRIYNGLRGFCDQVFAVRILGERHSLD.

Lysine 10 is a catalytic residue. Position 94 to 104 (94 to 104 (PVAAGLAGGSS)) interacts with ATP. Aspartate 136 is an active-site residue.

This sequence belongs to the GHMP kinase family. IspE subfamily.

The enzyme catalyses 4-CDP-2-C-methyl-D-erythritol + ATP = 4-CDP-2-C-methyl-D-erythritol 2-phosphate + ADP + H(+). It functions in the pathway isoprenoid biosynthesis; isopentenyl diphosphate biosynthesis via DXP pathway; isopentenyl diphosphate from 1-deoxy-D-xylulose 5-phosphate: step 3/6. Catalyzes the phosphorylation of the position 2 hydroxy group of 4-diphosphocytidyl-2C-methyl-D-erythritol. This is 4-diphosphocytidyl-2-C-methyl-D-erythritol kinase from Geobacillus sp. (strain WCH70).